A 160-amino-acid chain; its full sequence is Large ribosomal subunit protein uL22c (160 aa).

Belongs to the universal ribosomal protein uL22 family. In terms of assembly, part of the 50S ribosomal subunit.

The protein localises to the plastid. Its subcellular location is the chloroplast. Functionally, this protein binds specifically to 23S rRNA. Its function is as follows. The globular domain of the protein is located near the polypeptide exit tunnel on the outside of the subunit, while an extended beta-hairpin is found that lines the wall of the exit tunnel in the center of the 70S ribosome. This is Large ribosomal subunit protein uL22c (rpl22) from Panax ginseng (Korean ginseng).